The following is a 314-amino-acid chain: Protoheme IX farnesyltransferase (314 aa).

A run of 8 helical transmembrane segments spans residues 30-50, 51-71, 122-142, 151-171, 178-198, 224-244, 247-267, and 285-305; these read VMSLVVFTALVGLQAAPVSVH, PVIGFASILFVAIGAGASGAL, FLAAGLLAFTIFFYAVIYSMW, IVIGGAAGAFPPVIGWVIATG, WLMFALIFMWTPPHFWALALF, IIAYTVLLAVLAVGTGFSAIG, VYLAAALVLNALFLKGAIDIW, and FFRLSLWYLFAHFGAILLESA.

Belongs to the UbiA prenyltransferase family. Protoheme IX farnesyltransferase subfamily. In terms of assembly, interacts with CtaA.

It localises to the cell inner membrane. It carries out the reaction heme b + (2E,6E)-farnesyl diphosphate + H2O = Fe(II)-heme o + diphosphate. The protein operates within porphyrin-containing compound metabolism; heme O biosynthesis; heme O from protoheme: step 1/1. In terms of biological role, converts heme B (protoheme IX) to heme O by substitution of the vinyl group on carbon 2 of heme B porphyrin ring with a hydroxyethyl farnesyl side group. This chain is Protoheme IX farnesyltransferase, found in Roseobacter denitrificans (strain ATCC 33942 / OCh 114) (Erythrobacter sp. (strain OCh 114)).